A 337-amino-acid chain; its full sequence is Probable dual-specificity RNA methyltransferase RlmN (337 aa).

The Proton acceptor role is filled by Glu-88. A Radical SAM core domain is found at Ser-94–Asp-322. Residues Cys-101 and Cys-327 are joined by a disulfide bond. [4Fe-4S] cluster contacts are provided by Cys-108, Cys-112, and Cys-115. S-adenosyl-L-methionine contacts are provided by residues Gly-155–Glu-156, Ser-185, Ser-208–His-210, and Asn-284. The active-site S-methylcysteine intermediate is Cys-327.

The protein belongs to the radical SAM superfamily. RlmN family. [4Fe-4S] cluster serves as cofactor.

It is found in the cytoplasm. The enzyme catalyses adenosine(2503) in 23S rRNA + 2 reduced [2Fe-2S]-[ferredoxin] + 2 S-adenosyl-L-methionine = 2-methyladenosine(2503) in 23S rRNA + 5'-deoxyadenosine + L-methionine + 2 oxidized [2Fe-2S]-[ferredoxin] + S-adenosyl-L-homocysteine. It catalyses the reaction adenosine(37) in tRNA + 2 reduced [2Fe-2S]-[ferredoxin] + 2 S-adenosyl-L-methionine = 2-methyladenosine(37) in tRNA + 5'-deoxyadenosine + L-methionine + 2 oxidized [2Fe-2S]-[ferredoxin] + S-adenosyl-L-homocysteine. In terms of biological role, specifically methylates position 2 of adenine 2503 in 23S rRNA and position 2 of adenine 37 in tRNAs. This Thermosynechococcus vestitus (strain NIES-2133 / IAM M-273 / BP-1) protein is Probable dual-specificity RNA methyltransferase RlmN.